Reading from the N-terminus, the 130-residue chain is Small ribosomal subunit protein uS11c (130 aa).

It belongs to the universal ribosomal protein uS11 family. Part of the 30S ribosomal subunit.

The protein resides in the plastid. It localises to the chloroplast. This chain is Small ribosomal subunit protein uS11c, found in Physcomitrium patens (Spreading-leaved earth moss).